Here is a 70-residue protein sequence, read N- to C-terminus: Small ribosomal subunit protein bS21 (70 aa).

Belongs to the bacterial ribosomal protein bS21 family.

In Nautilia profundicola (strain ATCC BAA-1463 / DSM 18972 / AmH), this protein is Small ribosomal subunit protein bS21.